Here is a 382-residue protein sequence, read N- to C-terminus: cAMP-dependent protein kinase type I-alpha regulatory subunit (382 aa).

An N-acetylalanine modification is found at A2. Residues 2–136 form a dimerization and phosphorylation region; the sequence is ATSSSSSSEE…AALAKAIEKN (135 aa). The disordered stretch occupies residues 62–96; it reads TKQLLNQQKSGSRSDSREDEISPPPPMNPVVKGRR. The Pseudophosphorylation motif motif lies at 97–101; sequence RRGAI. 3',5'-cyclic AMP-binding positions include 138-255, E203, R212, 256-382, E327, and R336; these read LFAH…SKVS and ILES…SLSV.

The protein belongs to the cAMP-dependent kinase regulatory chain family. The inactive form of the enzyme is composed of two regulatory chains and two catalytic chains. Activation by cAMP produces two active catalytic monomers and a regulatory dimer that binds four cAMP molecules. In terms of processing, the pseudophosphorylation site binds to the substrate-binding region of the catalytic chain but is not phosphorylated. The physiological significance of phosphorylations by other kinases is unclear.

It is found in the cell membrane. The sequence is that of cAMP-dependent protein kinase type I-alpha regulatory subunit (PRKAR1A) from Gallus gallus (Chicken).